Reading from the N-terminus, the 501-residue chain is Cytochrome P450 4d2 (501 aa).

Positions 311 and 449 each coordinate heme.

The protein belongs to the cytochrome P450 family. Heme serves as cofactor.

Its subcellular location is the endoplasmic reticulum membrane. The protein resides in the microsome membrane. Its function is as follows. Involved in the metabolism of insect hormones and in the breakdown of synthetic insecticides. The polypeptide is Cytochrome P450 4d2 (Cyp4d2) (Drosophila melanogaster (Fruit fly)).